The primary structure comprises 376 residues: Chaperone protein DnaJ (376 aa).

A J domain is found at 5-72 (DFYEVLGVPK…QKRAAYDQYG (68 aa)). Residues 136–214 (GKEAQIRIPS…CHGQGRVKKQ (79 aa)) form a CR-type zinc finger. The Zn(2+) site is built by Cys149, Cys152, Cys166, Cys169, Cys188, Cys191, Cys202, and Cys205. CXXCXGXG motif repeat units lie at residues 149 to 156 (CETCHGSG), 166 to 173 (CGTCQGSG), 188 to 195 (CPHCRGTG), and 202 to 209 (CTACHGQG). Disordered stretches follow at residues 227–246 (DGMR…GGPP) and 354–376 (KKGG…SFFS). The span at 237 to 246 (GEPGTNGGPP) shows a compositional bias: gly residues. Residues 367–376 (WTDRLKSFFS) are compositionally biased toward basic and acidic residues.

It belongs to the DnaJ family. Homodimer. Zn(2+) serves as cofactor.

The protein localises to the cytoplasm. Participates actively in the response to hyperosmotic and heat shock by preventing the aggregation of stress-denatured proteins and by disaggregating proteins, also in an autonomous, DnaK-independent fashion. Unfolded proteins bind initially to DnaJ; upon interaction with the DnaJ-bound protein, DnaK hydrolyzes its bound ATP, resulting in the formation of a stable complex. GrpE releases ADP from DnaK; ATP binding to DnaK triggers the release of the substrate protein, thus completing the reaction cycle. Several rounds of ATP-dependent interactions between DnaJ, DnaK and GrpE are required for fully efficient folding. Also involved, together with DnaK and GrpE, in the DNA replication of plasmids through activation of initiation proteins. The polypeptide is Chaperone protein DnaJ (Acidovorax ebreus (strain TPSY) (Diaphorobacter sp. (strain TPSY))).